Here is a 215-residue protein sequence, read N- to C-terminus: Cytidylate kinase (215 aa).

10-18 (GPAASGKGT) serves as a coordination point for ATP.

The protein belongs to the cytidylate kinase family. Type 1 subfamily.

Its subcellular location is the cytoplasm. It carries out the reaction CMP + ATP = CDP + ADP. The catalysed reaction is dCMP + ATP = dCDP + ADP. This chain is Cytidylate kinase, found in Bartonella quintana (strain Toulouse) (Rochalimaea quintana).